The chain runs to 1187 residues: Protein WWC2 (1187 aa).

WW domains follow at residues 10–43 and 57–90; these read LPLPRGWEEARDYDGKVFYIDHNTRRTSWIDPRD and DELPWGWEAGFDPQIGAYYIDHINKTTQIEDPRK. Coiled coils occupy residues 121 to 194 and 224 to 256; these read KEQR…YKQQ and ELKSIRKAISSGEKEKQDLMQSLAKLQERFHLD. The residue at position 286 (Ser286) is a Phosphoserine. The stretch at 302 to 423 forms a coiled coil; it reads LAEKVRLSLQ…EETTKLTTSL (122 aa). The segment at 438-464 is disordered; sequence SSGSSLGSLASSRGSLNTSSRGSLNSL. The region spanning 697–820 is the C2 domain; it reads ETAQVQIGLR…FSNEIFMLWY (124 aa). Disordered stretches follow at residues 830-849 and 874-963; these read CKKNEDGNEEPGARSQQPML and ELAQ…ETNT. Positions 859-885 form a coiled coil; the sequence is ALLARTSAELLAVEQELAQEEEEEELR. Over residues 875-884 the composition is skewed to acidic residues; that stretch reads LAQEEEEEEL. Phosphothreonine is present on Thr999. The residue at position 1017 (Ser1017) is a Phosphoserine. An interaction with PRKCZ region spans residues 1026–1045; the sequence is SLFVRNSTERRSLRVKRAVC. Positions 1063–1143 form a coiled coil; sequence DLELDLQASL…DLNAERLMRQ (81 aa).

It belongs to the WWC family. As to quaternary structure, forms homodimers and heterodimers with WWC1 and WWC3. Interacts with DLC1 and PRKCZ. Interacts (via WW domains) with LATS1 and LATS2.

Its subcellular location is the cytoplasm. It is found in the cytosol. In terms of biological role, regulator of the Hippo signaling pathway, also known as the Salvador-Warts-Hippo (SWH) pathway. Enhances phosphorylation of LATS1 and YAP1 and negatively regulates cell proliferation and organ growth due to a suppression of the transcriptional activity of YAP1, the major effector of the Hippo pathway. In Mus musculus (Mouse), this protein is Protein WWC2 (Wwc2).